A 263-amino-acid chain; its full sequence is Peptide methionine sulfoxide reductase A4, chloroplastic (263 aa).

Residues 1–75 constitute a chloroplast transit peptide; it reads MPPLLASTSS…GLGGLGGSPR (75 aa).

The protein belongs to the MsrA Met sulfoxide reductase family. Expressed in roots, stems, leaves and flowers.

It is found in the plastid. It localises to the chloroplast. The catalysed reaction is L-methionyl-[protein] + [thioredoxin]-disulfide + H2O = L-methionyl-(S)-S-oxide-[protein] + [thioredoxin]-dithiol. The enzyme catalyses [thioredoxin]-disulfide + L-methionine + H2O = L-methionine (S)-S-oxide + [thioredoxin]-dithiol. Catalyzes the reduction of methionine sulfoxide (MetSO) to methionine in proteins. Involved in abiotic and salt stress responses. Plays a protective role against oxidative stress by restoring activity to proteins that have been inactivated by methionine oxidation. MSRA family specifically reduces the MetSO S-enantiomer. This Oryza sativa subsp. japonica (Rice) protein is Peptide methionine sulfoxide reductase A4, chloroplastic.